The sequence spans 296 residues: Glycine--tRNA ligase alpha subunit (296 aa).

The protein belongs to the class-II aminoacyl-tRNA synthetase family. Tetramer of two alpha and two beta subunits.

Its subcellular location is the cytoplasm. It catalyses the reaction tRNA(Gly) + glycine + ATP = glycyl-tRNA(Gly) + AMP + diphosphate. In Synechococcus sp. (strain CC9605), this protein is Glycine--tRNA ligase alpha subunit.